Reading from the N-terminus, the 347-residue chain is MDENKKRALSVALSQIEKQFGKGSVMRMGDRVIEAVEAIPTGSLMLDLALGIGGLPKGRVVEIYGPESSGKTTLTLQAIAQCQKKGGTAAFIDAEHALDPIYAGKLGVNVDDLLLSQPDTGEQALEIADMLVRSGSIDIMVIDSVAALTPRAEIEGEMGDQLPGLQARLMSQALRKLTGNIKRSNTLVIFINQLRMKIGVMMPGQSPETTTGGNALKFYASVRLDIRRIGAIKKGDEIIGNQTKIKVVKNKLAPPFKQVVTEILYGEGISREGELIEMGVEAKLVEKAGAWYSYGGERIGQGKDNARGYLRENPHLAAKLEADLREKFEPTELSREEGDEDTLEDTM.

65 to 72 (GPESSGKT) contacts ATP. A compositionally biased stretch (basic and acidic residues) spans 327 to 336 (KFEPTELSRE). The disordered stretch occupies residues 327-347 (KFEPTELSREEGDEDTLEDTM). Residues 337-347 (EGDEDTLEDTM) show a composition bias toward acidic residues.

This sequence belongs to the RecA family.

It is found in the cytoplasm. Can catalyze the hydrolysis of ATP in the presence of single-stranded DNA, the ATP-dependent uptake of single-stranded DNA by duplex DNA, and the ATP-dependent hybridization of homologous single-stranded DNAs. It interacts with LexA causing its activation and leading to its autocatalytic cleavage. The sequence is that of Protein RecA from Xylella fastidiosa (strain 9a5c).